We begin with the raw amino-acid sequence, 625 residues long: MRPAQTNQFDYVKIGLASPERIRQWGERTLPNGQVVGEVTKPETINYRTLKPEMDGLFCERIFGPAKDWECHCGKYKRVRHRGIVCERCGVEVTESRVRRHRMGYIKLAAPVAHVWYLKGIPSYISILLDMPLRDVEQIVYFNSYVVLSPGNAETLTYKQLLSEDQWLEIEDQIYSEDSQLQGVEVGIGAEALLRLLADINLEQEAESLREEIGSAKGQKRAKLIKRLRVIDNFIATGSKPEWMVMTVIPVIPPDLRPMVQLDGGRFATSDLNDLYRRVINRNNRLARLQEILAPEIIVRNEKRMLQEAVDALIDNGRRGRTVVGANNRPLKSLSDIIEGKQGRFRQNLLGKRVDYSGRSVIVVGPKLKIHQCGLPREMAIELFQPFVINRLIRSGMVNNIKAAKKLISRNDPSVWDVLEEVIEGHPVMLNRAPTLHRLGIQAFEPILVEGRAIQLHPLVCPAFNADFDGDQMAVHVPLSLESQAEARLLMLASNNILSPATGRPIITPSQDMVLGAYYLTAENPGATKGAGKYFASLDDVIMAFQQEQIDLHAYIYVRFDGEVESDQPDTDPLEVTNNDDGSRTVLYKYRRVREDAQGNLISQYVRTTPGRVIYNKAIQEALAS.

The Zn(2+) site is built by Cys-71, Cys-73, Cys-86, and Cys-89. Mg(2+) is bound by residues Asp-467, Asp-469, and Asp-471.

Belongs to the RNA polymerase beta' chain family. RpoC1 subfamily. As to quaternary structure, in cyanobacteria the RNAP catalytic core is composed of 2 alpha, 1 beta, 1 beta', 1 gamma and 1 omega subunit. When a sigma factor is associated with the core the holoenzyme is formed, which can initiate transcription. Mg(2+) serves as cofactor. Zn(2+) is required as a cofactor.

It carries out the reaction RNA(n) + a ribonucleoside 5'-triphosphate = RNA(n+1) + diphosphate. In terms of biological role, DNA-dependent RNA polymerase catalyzes the transcription of DNA into RNA using the four ribonucleoside triphosphates as substrates. This Trichormus variabilis (strain ATCC 29413 / PCC 7937) (Anabaena variabilis) protein is DNA-directed RNA polymerase subunit gamma.